We begin with the raw amino-acid sequence, 92 residues long: Small ribosomal subunit protein uS19 (92 aa).

This sequence belongs to the universal ribosomal protein uS19 family.

Its function is as follows. Protein S19 forms a complex with S13 that binds strongly to the 16S ribosomal RNA. The chain is Small ribosomal subunit protein uS19 from Aliivibrio salmonicida (strain LFI1238) (Vibrio salmonicida (strain LFI1238)).